The chain runs to 712 residues: Follistatin-like domain-containing protein DDB_G0289517 (712 aa).

The signal sequence occupies residues 1 to 21; that stretch reads MKIQTIIQIVLISFLFLNVES. Residue asparagine 102 is glycosylated (N-linked (GlcNAc...) asparagine). The segment at 181–400 is disordered; it reads DIYNHLNPDS…SSSPVHQDPC (220 aa). A compositionally biased stretch (basic and acidic residues) spans 192–203; the sequence is QFKDKPNHENHK. Over residues 204–214 the composition is skewed to basic residues; that stretch reads KDKNNKKHKKD. N-linked (GlcNAc...) asparagine glycans are attached at residues asparagine 217 and asparagine 234. Positions 220–251 are enriched in low complexity; sequence DKNNNNNNNNNNKKNKTINNNEPNQNQQSNPI. The segment covering 254-269 has biased composition (polar residues); that stretch reads TFNNETPFPWNFKNQD. Low complexity predominate over residues 270–281; that stretch reads QQQQKQEQTQKQ. Residues 301–321 show a composition bias toward polar residues; the sequence is KEPTTHLNTIEPTSFTASASR. A compositionally biased stretch (acidic residues) spans 330-339; that stretch reads KDEENIDENN. The span at 352 to 364 shows a compositional bias: basic and acidic residues; that stretch reads DDKSKKPKDDEKH. Residue asparagine 369 is glycosylated (N-linked (GlcNAc...) asparagine). Residues 374–384 are compositionally biased toward acidic residues; it reads PADDPSIEITE. Over residues 386–395 the composition is skewed to polar residues; it reads PTITPSSSPV. 2 consecutive Follistatin-like domains span residues 399–421 and 471–494; these read PCKKATCPNGSHCLVYGNQAYCK and TCSTIKCEDDEVCINKVGLNPYCQ. A glycan (N-linked (GlcNAc...) asparagine) is linked at asparagine 407. Asparagine 505, asparagine 524, and asparagine 566 each carry an N-linked (GlcNAc...) asparagine glycan. The 23-residue stretch at 596 to 618 folds into the Follistatin-like 3 domain; sequence SCETLLCEGVNSYCVENGGPICK. Asparagine 622 is a glycosylation site (N-linked (GlcNAc...) asparagine). Follistatin-like domains follow at residues 660-682 and 687-710; these read SCSVIQCPDNQYCVNTDKGPKCY and ECSNSRCPRDYTCKRDEIRGGACL.

It localises to the secreted. In Dictyostelium discoideum (Social amoeba), this protein is Follistatin-like domain-containing protein DDB_G0289517.